The following is a 114-amino-acid chain: Iron-sulfur cluster insertion protein ErpA (114 aa).

Iron-sulfur cluster-binding residues include Cys42, Cys106, and Cys108.

The protein belongs to the HesB/IscA family. In terms of assembly, homodimer. Requires iron-sulfur cluster as cofactor.

Required for insertion of 4Fe-4S clusters for at least IspG. The sequence is that of Iron-sulfur cluster insertion protein ErpA from Sodalis glossinidius (strain morsitans).